The sequence spans 326 residues: Protein C10 (326 aa).

It belongs to the poxviridae C4/C10 protein family.

The chain is Protein C10 from Homo sapiens (Human).